A 393-amino-acid polypeptide reads, in one-letter code: ATP phosphoribosyltransferase regulatory subunit (393 aa).

Belongs to the class-II aminoacyl-tRNA synthetase family. HisZ subfamily. Heteromultimer composed of HisG and HisZ subunits.

Its subcellular location is the cytoplasm. It functions in the pathway amino-acid biosynthesis; L-histidine biosynthesis; L-histidine from 5-phospho-alpha-D-ribose 1-diphosphate: step 1/9. In terms of biological role, required for the first step of histidine biosynthesis. May allow the feedback regulation of ATP phosphoribosyltransferase activity by histidine. This is ATP phosphoribosyltransferase regulatory subunit from Marinobacter nauticus (strain ATCC 700491 / DSM 11845 / VT8) (Marinobacter aquaeolei).